The sequence spans 130 residues: Small ribosomal subunit protein uS11 (130 aa).

This sequence belongs to the universal ribosomal protein uS11 family. Part of the 30S ribosomal subunit. Interacts with proteins S7 and S18. Binds to IF-3.

Located on the platform of the 30S subunit, it bridges several disparate RNA helices of the 16S rRNA. Forms part of the Shine-Dalgarno cleft in the 70S ribosome. The sequence is that of Small ribosomal subunit protein uS11 from Pseudoalteromonas atlantica (strain T6c / ATCC BAA-1087).